The following is a 452-amino-acid chain: La-related protein 1B (452 aa).

Positions 1–22 are enriched in low complexity; it reads MATTASSAANSASRFSIDSSIS. The interval 1–251 is disordered; the sequence is MATTASSAAN…GFSHRNYSGR (251 aa). Ala-2 is subject to N-acetylalanine. The span at 44–68 shows a compositional bias: polar residues; sequence LSLSQDDPFSAPSVSPPTGNNSSDY. Low complexity-rich tracts occupy residues 99–117, 136–163, 171–185, and 206–223; these read SWPA…SPSL, ATSN…VNNS, NNNT…NVSN, and SGNF…SYPR. Over residues 225-236 the composition is skewed to basic and acidic residues; it reads EGLHHGNRRNYE. A compositionally biased stretch (polar residues) spans 237–247; the sequence is HGNQSGFSHRN. The region spanning 328-417 is the HTH La-type RNA-binding domain; the sequence is RNFDAILYNK…RGDWDKYLLP (90 aa). The disordered stretch occupies residues 419–452; the sequence is EPSRSGPAAGASNNASLVSQIESMTLSERSREGV. The segment covering 422 to 434 has biased composition (low complexity); it reads RSGPAAGASNNAS. Residues 435 to 445 are compositionally biased toward polar residues; the sequence is LVSQIESMTLS.

This sequence belongs to the LARP family.

The protein resides in the cytoplasm. In terms of biological role, promotes leaf senescence. This chain is La-related protein 1B (LARP1B), found in Arabidopsis thaliana (Mouse-ear cress).